The chain runs to 145 residues: CASP-like protein SELMODRAFT_406854 (145 aa).

At 1–31 the chain is on the cytoplasmic side; that stretch reads MGVASQSSVANEAGAAPEASIQQTLRGFSSP. Residues 32-52 traverse the membrane as a helical segment; that stretch reads TSLLLRIATAVLCTLTLAFLV. The Extracellular portion of the chain corresponds to 53 to 75; sequence TSKERKEIASIDIVAIWSNSKAL. The helical transmembrane segment at 76–96 threads the bilayer; the sequence is IFLAVVSGICLGYSLLHAAVF. The Cytoplasmic portion of the chain corresponds to 97–112; it reads LVMLSGNRKPLARKKA. The chain crosses the membrane as a helical span at residues 113-133; the sequence is LDWMVFLADQVFFKIFCWFSI. Residues 134–145 are Extracellular-facing; that stretch reads RVSSRRSKAGFV.

Belongs to the Casparian strip membrane proteins (CASP) family. Homodimer and heterodimers.

It localises to the cell membrane. This chain is CASP-like protein SELMODRAFT_406854, found in Selaginella moellendorffii (Spikemoss).